We begin with the raw amino-acid sequence, 238 residues long: Opacity protein opA60 (238 aa).

Residue A1 is a signal peptide.

It belongs to the opacity porin family.

Its subcellular location is the cell outer membrane. Functionally, implicated in a number of adherence functions. OPA proteins are implicated in pathogenesis and are subject to phase variation. This chain is Opacity protein opA60 (opaH), found in Neisseria gonorrhoeae.